We begin with the raw amino-acid sequence, 140 residues long: Transcription antitermination protein NusB (140 aa).

It belongs to the NusB family.

Its function is as follows. Involved in transcription antitermination. Required for transcription of ribosomal RNA (rRNA) genes. Binds specifically to the boxA antiterminator sequence of the ribosomal RNA (rrn) operons. This is Transcription antitermination protein NusB from Streptococcus pneumoniae (strain JJA).